Reading from the N-terminus, the 316-residue chain is Succinoglycan biosynthesis protein ExoV (316 aa).

It functions in the pathway glycan metabolism; exopolysaccharide biosynthesis. In Rhizobium meliloti (strain 1021) (Ensifer meliloti), this protein is Succinoglycan biosynthesis protein ExoV (exoV).